The following is a 761-amino-acid chain: Xaa-Pro dipeptidyl-peptidase (761 aa).

Residues serine 347, aspartate 467, and histidine 497 each act as charge relay system in the active site.

The protein belongs to the peptidase S15 family. As to quaternary structure, homodimer.

Its subcellular location is the cytoplasm. The enzyme catalyses Hydrolyzes Xaa-Pro-|- bonds to release unblocked, N-terminal dipeptides from substrates including Ala-Pro-|-p-nitroanilide and (sequentially) Tyr-Pro-|-Phe-Pro-|-Gly-Pro-|-Ile.. Its function is as follows. Removes N-terminal dipeptides sequentially from polypeptides having unsubstituted N-termini provided that the penultimate residue is proline. The chain is Xaa-Pro dipeptidyl-peptidase from Streptococcus agalactiae serotype V (strain ATCC BAA-611 / 2603 V/R).